Consider the following 407-residue polypeptide: MKRAFIMVLDSFGIGATEDADRFGDVGSDTLGHIAEACAKGEADNGRKGPLNLPNLTRLGLVKAHEGSTGKIAAGMDGNADVIGAYAWAHELSSGKDTPSGHWEIAGVPVLFDWGYFSDHENSFPQELLDKLVKRANLPGYLGNCHSSGTVILDQLGEEHMKTGKPIFYTSADSVFQIACHEETFGLDKLYELCEIAREELTEGGYNIGRVIARPFIGDKAGNFQRTGNRHDLAVEPPAPTVLQKLVDEKQGHVVSVGKIADIYANCGITKKVKATGLDALFDATIKEMKDAGDKTIVFTNFVDFDSSWGHRRDIAGYASGLELFDRRLPELMALVGEDDILILTADHGCDPSWTGTDHTREHIPVLIYGPKVKPGSLGHRETFADIGQTLASYFGTSPMDYGKNML.

The Mn(2+) site is built by aspartate 10, aspartate 306, histidine 311, aspartate 347, histidine 348, and histidine 359.

It belongs to the phosphopentomutase family. Mn(2+) serves as cofactor.

It is found in the cytoplasm. It catalyses the reaction 2-deoxy-alpha-D-ribose 1-phosphate = 2-deoxy-D-ribose 5-phosphate. The catalysed reaction is alpha-D-ribose 1-phosphate = D-ribose 5-phosphate. It participates in carbohydrate degradation; 2-deoxy-D-ribose 1-phosphate degradation; D-glyceraldehyde 3-phosphate and acetaldehyde from 2-deoxy-alpha-D-ribose 1-phosphate: step 1/2. Isomerase that catalyzes the conversion of deoxy-ribose 1-phosphate (dRib-1-P) and ribose 1-phosphate (Rib-1-P) to deoxy-ribose 5-phosphate (dRib-5-P) and ribose 5-phosphate (Rib-5-P), respectively. The sequence is that of Phosphopentomutase from Salmonella arizonae (strain ATCC BAA-731 / CDC346-86 / RSK2980).